A 428-amino-acid polypeptide reads, in one-letter code: Cholesterol 7-desaturase (428 aa).

A helical transmembrane segment spans residues 6–26; the sequence is IWGFLTAHPISVVTTILIVYL. One can recognise a Rieske domain in the interval 81-187; it reads WYCVCESEKL…CIERNNNIYL (107 aa). Positions 122, 124, 143, and 146 each coordinate [2Fe-2S] cluster.

Belongs to the cholesterol 7-desaturase family. Requires [2Fe-2S] cluster as cofactor. Expressed in intestine at all postembryonic stages, including dauer. Expression is reduced in daf-2 mutants.

The protein resides in the membrane. The catalysed reaction is cholesterol + NADPH + O2 + H(+) = 7-dehydrocholesterol + NADP(+) + 2 H2O. It carries out the reaction cholesterol + NADH + O2 + H(+) = 7-dehydrocholesterol + NAD(+) + 2 H2O. The protein operates within steroid hormone biosynthesis; dafachronic acid biosynthesis. Catalyzes the production of 7-dehydrocholesterol (7-DHC or cholesta-5,7-dien-3beta-ol) by inserting a double bond (desaturating) at the C7-C8 single bond of cholesterol. This reaction is the first step in the synthesis of the steroid hormone Delta(7)-dafachronic acid (one of the principal steroid hormones in nematodes). Dafachronic acids bind directly to the nuclear hormone receptor (NHR) daf-12, suppressing dauer formation and inducing reproductive growth. This chain is Cholesterol 7-desaturase (daf-36), found in Caenorhabditis elegans.